The primary structure comprises 382 residues: F-box/kelch-repeat protein At3g16580 (382 aa).

An F-box domain is found at 9-55 (WEFSLSLPWELIEEILSRVPPESLLRFKTVSKQWNALFRDKTFINNH). Kelch repeat units follow at residues 150-196 (KIFA…NIYT) and 334-381 (WIYV…AELQ).

This Arabidopsis thaliana (Mouse-ear cress) protein is F-box/kelch-repeat protein At3g16580.